The sequence spans 115 residues: Ustilagic acid biosynthesis cluster protein orf3 (115 aa).

The signal sequence occupies residues 1-38 (MTYSKIACSLGKRGIARAPNQASSFFLLLFLFAKFSQQ). The tract at residues 42–62 (SPCLASSGVAKSRGPASTDRP) is disordered.

The protein operates within secondary metabolite biosynthesis. In terms of biological role, part of the gene cluster that mediates the biosynthesis of the glycolipid biosurfactant ustilagic acid (UA). UA is a secreted cellobiose glycolipid that is toxic for many microorganisms and confers biocontrol activity to U.maydis. UA consists of 15,16-dihydroxypalmitic or 2,15,16-trihydroxypalmitic acid, which is O-glycosidically linked to cellobiose at its terminal hydroxyl group. In addition, the cellobiose moiety is acetylated and acylated with a short-chain hydroxy fatty acid. UA biosynthesis starts with omega-hydroxylation of palmitic acid catalyzed by the cytochrome P450 monooxygenase cyp1. Terminal hydroxylation of palmitic acid precedes subterminal hydroxylation catalyzed by the cytochrome P450 monooxygenase cyp2. Sequential glucosylation of the hydroxy fatty acid is probably catalyzed by the glycosyltransferase ugt1. The cellobiose lipid is further decorated by acetylation of the proximal glucose residue and by acylation with a short-chain beta-hydroxy fatty acid at the distal glucose residue. The acyltransferase uat1 may be a good candidate for catalyzing either acetylation or acylation of the cellobiose lipid. The fatty acid synthase fas2 may be involved in synthesis of the carbon backbone of the short-chain beta-hydroxy fatty acid esterified to the cellobiose disaccharide. The secreted UA consists of a mixture of both alpha-hydroxylated and non-hydroxylated glycolipids; therefore, alpha-hydroxylation of the long-chain fatty, catalyzed by the fatty acid hydroxylase ahd1, occurs late in UA biosynthesis and may be the last step before secretion. The protein is Ustilagic acid biosynthesis cluster protein orf3 of Mycosarcoma maydis (Corn smut fungus).